The following is a 28-amino-acid chain: Short cationic peptide-1a (28 aa).

At E28 the chain carries Glutamic acid 1-amide.

Expressed by the venom gland.

Its subcellular location is the secreted. The chain is Short cationic peptide-1a from Cupiennius salei (American wandering spider).